The chain runs to 262 residues: MKFTVLTLFPEMFAPVHESILKRAQAAQLIEVSLINFRDYAASKHKNVDDVPYGGGAGMVLKPEPLFAALRDLPPSPGRRRIVLLSPQGEVFQQRKAEEWSRWDELVFICGHYEGFDERIRSLADEEVSLGDFVLTGGELAAMVMMDAVARLLPGVLGEKASAEEDSHSGGLLEYPHYTRPPVFEGMEVPDVLLSGHHRRIEEWRRKESLRRTFLKRPDLFAKVEFRAGDFNLLEELIREHPELAQERSRWEHLRPKPKKRR.

S-adenosyl-L-methionine is bound by residues Gly-111 and Leu-130–Leu-135.

It belongs to the RNA methyltransferase TrmD family. As to quaternary structure, homodimer.

Its subcellular location is the cytoplasm. The catalysed reaction is guanosine(37) in tRNA + S-adenosyl-L-methionine = N(1)-methylguanosine(37) in tRNA + S-adenosyl-L-homocysteine + H(+). Its function is as follows. Specifically methylates guanosine-37 in various tRNAs. The sequence is that of tRNA (guanine-N(1)-)-methyltransferase from Desulfitobacterium hafniense (strain Y51).